We begin with the raw amino-acid sequence, 344 residues long: Dihydroorotase (344 aa).

Residues H13 and H15 each coordinate Zn(2+). Substrate is bound by residues H15–R17 and N41. Zn(2+) contacts are provided by K98, H135, and H173. The residue at position 98 (K98) is an N6-carboxylysine. H135 lines the substrate pocket. L218 contributes to the substrate binding site. D247 serves as a coordination point for Zn(2+). Residue D247 is part of the active site. Substrate-binding residues include H251 and A263.

It belongs to the metallo-dependent hydrolases superfamily. DHOase family. Class II DHOase subfamily. In terms of assembly, homodimer. The cofactor is Zn(2+).

The enzyme catalyses (S)-dihydroorotate + H2O = N-carbamoyl-L-aspartate + H(+). It participates in pyrimidine metabolism; UMP biosynthesis via de novo pathway; (S)-dihydroorotate from bicarbonate: step 3/3. Functionally, catalyzes the reversible cyclization of carbamoyl aspartate to dihydroorotate. In Neisseria meningitidis serogroup B (strain ATCC BAA-335 / MC58), this protein is Dihydroorotase.